The primary structure comprises 388 residues: Chorismate synthase (388 aa).

Arg39 and Arg45 together coordinate NADP(+). Residues 130–132, 251–252, Gly296, 311–315, and Arg337 each bind FMN; these read RSS, NA, and KPIPT.

The protein belongs to the chorismate synthase family. Homotetramer. FMNH2 is required as a cofactor.

The catalysed reaction is 5-O-(1-carboxyvinyl)-3-phosphoshikimate = chorismate + phosphate. It participates in metabolic intermediate biosynthesis; chorismate biosynthesis; chorismate from D-erythrose 4-phosphate and phosphoenolpyruvate: step 7/7. Its function is as follows. Catalyzes the anti-1,4-elimination of the C-3 phosphate and the C-6 proR hydrogen from 5-enolpyruvylshikimate-3-phosphate (EPSP) to yield chorismate, which is the branch point compound that serves as the starting substrate for the three terminal pathways of aromatic amino acid biosynthesis. This reaction introduces a second double bond into the aromatic ring system. This chain is Chorismate synthase, found in Streptococcus pyogenes serotype M6 (strain ATCC BAA-946 / MGAS10394).